Here is a 470-residue protein sequence, read N- to C-terminus: AAA-ATPase At5g40000 (470 aa).

Positions 1-30 are cleaved as a signal peptide; that stretch reads MMMMGDSFGSIGSSMASLFFLWATIQQIFP. 248–255 contributes to the ATP binding site; the sequence is GPPGTGKS.

This sequence belongs to the AAA ATPase family. BCS1 subfamily. Mg(2+) serves as cofactor.

It catalyses the reaction ATP + H2O = ADP + phosphate + H(+). This chain is AAA-ATPase At5g40000, found in Arabidopsis thaliana (Mouse-ear cress).